Consider the following 470-residue polypeptide: tRNA modification GTPase MnmE (470 aa).

(6S)-5-formyl-5,6,7,8-tetrahydrofolate contacts are provided by arginine 24, glutamate 81, and lysine 122. The 166-residue stretch at 218-383 (GIKIVIAGKP…LQEYLSNNIK (166 aa)) folds into the TrmE-type G domain. Asparagine 228 contacts K(+). GTP is bound by residues 228–233 (NAGKSS), 247–253 (STISGTT), and 272–275 (DTAG). Serine 232 provides a ligand contact to Mg(2+). Positions 247, 249, and 252 each coordinate K(+). Position 253 (threonine 253) interacts with Mg(2+). Lysine 470 provides a ligand contact to (6S)-5-formyl-5,6,7,8-tetrahydrofolate.

It belongs to the TRAFAC class TrmE-Era-EngA-EngB-Septin-like GTPase superfamily. TrmE GTPase family. As to quaternary structure, homodimer. Heterotetramer of two MnmE and two MnmG subunits. The cofactor is K(+).

It is found in the cytoplasm. In terms of biological role, exhibits a very high intrinsic GTPase hydrolysis rate. Involved in the addition of a carboxymethylaminomethyl (cmnm) group at the wobble position (U34) of certain tRNAs, forming tRNA-cmnm(5)s(2)U34. The sequence is that of tRNA modification GTPase MnmE from Blochmanniella pennsylvanica (strain BPEN).